Here is a 289-residue protein sequence, read N- to C-terminus: MASTKEIRSKIKSVQNTRKITKAMEMVAASKMRRAQERMRNARPYAEKIREIVANLSKANPEFRPAYMEAREVKKVGTILVTTDKGLCGGLNTNVLRFITNQVRDLQEKNIEIVYTAIGSKGLQFLNRSKAKLISQTIQIGDTPHMDVLIGAIIAQLEAFERGEIDAVYLAYNRFVNAMKQEPVLEKLLPLEPAALVPEDKAGNSWDYIYEPDAESILNGLLKRYVEAMIYQAVTENMASEQSARMVSMKAASDNAKNVIGELQLEYNKTRQAAITKELSEIVGGAAAV.

This sequence belongs to the ATPase gamma chain family. As to quaternary structure, F-type ATPases have 2 components, CF(1) - the catalytic core - and CF(0) - the membrane proton channel. CF(1) has five subunits: alpha(3), beta(3), gamma(1), delta(1), epsilon(1). CF(0) has three main subunits: a, b and c.

The protein localises to the cell inner membrane. Its function is as follows. Produces ATP from ADP in the presence of a proton gradient across the membrane. The gamma chain is believed to be important in regulating ATPase activity and the flow of protons through the CF(0) complex. The chain is ATP synthase gamma chain from Polynucleobacter asymbioticus (strain DSM 18221 / CIP 109841 / QLW-P1DMWA-1) (Polynucleobacter necessarius subsp. asymbioticus).